The primary structure comprises 172 residues: uncharacterized protein (172 aa).

This is an uncharacterized protein from Mycoplasma pneumoniae (strain ATCC 29342 / M129 / Subtype 1) (Mycoplasmoides pneumoniae).